The sequence spans 294 residues: GDP-6-deoxy-D-talose 4-dehydrogenase (294 aa).

NAD(+) contacts are provided by residues 11–12 (FI), 38–39 (DL), 60–64 (LAALT), Thr104, Tyr128, Lys132, and Phe154. Thr104 and Tyr128 together coordinate substrate. Catalysis depends on Tyr128, which acts as the Proton acceptor. Positions 155 and 190 each coordinate substrate.

It belongs to the NAD(P)-dependent epimerase/dehydratase family.

It catalyses the reaction GDP-6-deoxy-alpha-D-talose + NAD(+) = GDP-4-dehydro-alpha-D-rhamnose + NADH + H(+). The enzyme catalyses GDP-6-deoxy-alpha-D-talose + NADP(+) = GDP-4-dehydro-alpha-D-rhamnose + NADPH + H(+). It functions in the pathway bacterial outer membrane biogenesis; LPS O-antigen biosynthesis. Functionally, catalyzes the conversion of GDP-4-dehydro-6-deoxy-D-mannose to GDP-6-deoxy-D-talose. In Aggregatibacter actinomycetemcomitans (Actinobacillus actinomycetemcomitans), this protein is GDP-6-deoxy-D-talose 4-dehydrogenase (tld).